A 317-amino-acid polypeptide reads, in one-letter code: Methionyl-tRNA formyltransferase (317 aa).

112–115 is a (6S)-5,6,7,8-tetrahydrofolate binding site; it reads SLLP.

Belongs to the Fmt family.

The enzyme catalyses L-methionyl-tRNA(fMet) + (6R)-10-formyltetrahydrofolate = N-formyl-L-methionyl-tRNA(fMet) + (6S)-5,6,7,8-tetrahydrofolate + H(+). Attaches a formyl group to the free amino group of methionyl-tRNA(fMet). The formyl group appears to play a dual role in the initiator identity of N-formylmethionyl-tRNA by promoting its recognition by IF2 and preventing the misappropriation of this tRNA by the elongation apparatus. The polypeptide is Methionyl-tRNA formyltransferase (Mycobacterium avium (strain 104)).